The chain runs to 360 residues: Inhibin alpha chain (360 aa).

Residues 1 to 17 (MWLQLLLLLLAPQGGHG) form the signal peptide. The propeptide occupies 18–60 (CHGLELDRELVLAKVRALFLDALGPPPVTGEGGDPGVRRLHRR). A propeptide spans 61 to 226 (HAVGGFMRRG…PPSGGERARR (166 aa)) (inhibin alpha N-terminal region). 2 N-linked (GlcNAc...) asparagine glycosylation sites follow: Asn140 and Asn262. Disulfide bonds link Cys256–Cys322, Cys285–Cys357, and Cys289–Cys359.

Belongs to the TGF-beta family. As to quaternary structure, dimeric, linked by one or more disulfide bonds. Activin B is a dimer of alpha and beta-B. Inhibin A is a dimer of alpha and beta-A. Inhibin B is a dimer of alpha and beta-B. Interacts with TGFBR3L; this interaction regulates female fertility. Post-translationally, proteolytic processing yields a number of bioactive forms, consisting either solely of the mature alpha chain, of the most N-terminal propeptide linked through a disulfide bond to the mature alpha chain, or of the entire proprotein.

It is found in the secreted. Inhibins and activins inhibit and activate, respectively, the secretion of follitropin by the pituitary gland. Inhibins/activins are involved in regulating a number of diverse functions such as hypothalamic and pituitary hormone secretion, gonadal hormone secretion, germ cell development and maturation, erythroid differentiation, insulin secretion, nerve cell survival, embryonic axial development or bone growth, depending on their subunit composition. Inhibins appear to oppose the functions of activins. In terms of biological role, inhibin A is a dimer of alpha/INHA and beta-A/INHBA that functions as a feedback regulator in the hypothalamic-pituitary-gonadal (HPG) axis. Inhibits the secretion of FSH from the anterior pituitary gland by acting on pituitary gonadotrope cells. Antagonizes activin A by binding to the proteoglycan, betaglycan, and forming a stable complex with and, thereby, sequestering type II activin receptors while excluding type I receptor. Functionally, inhibin B is a dimer of alpha and beta-B that plays a crucial role in the regulation of the reproductive system by inhibiting the secretion of follicle-stimulating hormone (FSH) from the anterior pituitary gland. Thereby, maintains reproductive homeostasis in both males and females. Acts as a more potent suppressor of FSH release than inhibin A. Functions as competitive receptor antagonist binding activin type II receptors with high affinity in the presence of the TGF-beta type III coreceptor/TGFBR3L. This is Inhibin alpha chain (INHA) from Bos taurus (Bovine).